The primary structure comprises 366 residues: Beta sliding clamp (366 aa).

This sequence belongs to the beta sliding clamp family. In terms of assembly, forms a ring-shaped head-to-tail homodimer around DNA which binds and tethers DNA polymerases and other proteins to the DNA. The DNA replisome complex has a single clamp-loading complex (3 tau and 1 each of delta, delta', psi and chi subunits) which binds 3 Pol III cores (1 core on the leading strand and 2 on the lagging strand) each with a beta sliding clamp dimer. Additional proteins in the replisome are other copies of gamma, psi and chi, Ssb, DNA helicase and RNA primase.

Its subcellular location is the cytoplasm. Functionally, confers DNA tethering and processivity to DNA polymerases and other proteins. Acts as a clamp, forming a ring around DNA (a reaction catalyzed by the clamp-loading complex) which diffuses in an ATP-independent manner freely and bidirectionally along dsDNA. Initially characterized for its ability to contact the catalytic subunit of DNA polymerase III (Pol III), a complex, multichain enzyme responsible for most of the replicative synthesis in bacteria; Pol III exhibits 3'-5' exonuclease proofreading activity. The beta chain is required for initiation of replication as well as for processivity of DNA replication. This chain is Beta sliding clamp (dnaN), found in Haemophilus influenzae (strain ATCC 51907 / DSM 11121 / KW20 / Rd).